The following is a 253-amino-acid chain: MTEFVVLIPARLDSSRLPGKALADIHGKPMVVRVAEQAAKSKAARVVVATDHPDIQTVCQAHGIEAVMTSNRHESGTTRLAEAAAALKLPPHLVVVNVQGDEPLIAPELIDRTAEVLVENNVQMATAAHELHDFDELMNPNAVKVVLDKNRNAIYFSRAPIPYPRDAMRAGKREMPSETAVLRHIGIYAYRAGFLQRYAEMSVSPLETIESLEQLRVLWHGYPIAVETAKEAPAAGVDTQEDLDRVRAVFQTV.

This sequence belongs to the KdsB family.

The protein localises to the cytoplasm. The enzyme catalyses 3-deoxy-alpha-D-manno-oct-2-ulosonate + CTP = CMP-3-deoxy-beta-D-manno-octulosonate + diphosphate. It functions in the pathway nucleotide-sugar biosynthesis; CMP-3-deoxy-D-manno-octulosonate biosynthesis; CMP-3-deoxy-D-manno-octulosonate from 3-deoxy-D-manno-octulosonate and CTP: step 1/1. Its pathway is bacterial outer membrane biogenesis; lipopolysaccharide biosynthesis. Functionally, activates KDO (a required 8-carbon sugar) for incorporation into bacterial lipopolysaccharide in Gram-negative bacteria. In Neisseria meningitidis serogroup A / serotype 4A (strain DSM 15465 / Z2491), this protein is 3-deoxy-manno-octulosonate cytidylyltransferase.